The primary structure comprises 118 residues: Large ribosomal subunit protein bL20 (118 aa).

It belongs to the bacterial ribosomal protein bL20 family.

Its function is as follows. Binds directly to 23S ribosomal RNA and is necessary for the in vitro assembly process of the 50S ribosomal subunit. It is not involved in the protein synthesizing functions of that subunit. The sequence is that of Large ribosomal subunit protein bL20 from Bacillus mycoides (strain KBAB4) (Bacillus weihenstephanensis).